Reading from the N-terminus, the 411-residue chain is D-galactonate dehydratase family member SBI_01856 (411 aa).

Residues Asn-45 and His-130 each coordinate substrate. Residue Tyr-167 is the Proton donor/acceptor of the active site. Asp-219 serves as a coordination point for Mg(2+). Catalysis depends on His-221, which acts as the Proton donor/acceptor. 2 residues coordinate Mg(2+): Glu-245 and Glu-271. The substrate site is built by Glu-271, Arg-292, His-321, Asp-325, and Glu-348.

The protein belongs to the mandelate racemase/muconate lactonizing enzyme family. GalD subfamily. The cofactor is Mg(2+).

The catalysed reaction is D-gluconate = 2-dehydro-3-deoxy-D-gluconate + H2O. Functionally, has low D-gluconate dehydratase activity (in vitro), suggesting that it has no significant role in D-gluconate degradation in vivo. Has no detectable activity with a panel of 70 other acid sugars (in vitro). This Streptomyces bingchenggensis (strain BCW-1) protein is D-galactonate dehydratase family member SBI_01856.